The following is a 1141-amino-acid chain: Myosin-binding protein C, slow-type (1141 aa).

A compositionally biased stretch (basic and acidic residues) spans 1–10; that stretch reads MPEPTKKEEN. The disordered stretch occupies residues 1–51; sequence MPEPTKKEENEVPAPAPPPEEPSKEKEAGTTPAKDWTLVETPPGEEQAKQN. 5 Ig-like C2-type domains span residues 72-144, 251-340, 341-431, 432-520, and 522-619; these read GEDI…RCEV, SAAF…VREP, PIMV…VDLK, PLKI…HVID, and PKII…VVDF. Residue T406 is modified to Phosphothreonine. S611 is modified (phosphoserine). Fibronectin type-III domains are found at residues 622-721 and 722-833; these read PPVA…TSPP and TLLT…VKEI. T798 is modified (phosphothreonine). Y823 carries the phosphotyrosine modification. Residues 837 to 931 enclose the Ig-like C2-type 6 domain; the sequence is PKIRIPRHLK…ASIDIQIIDR (95 aa). Residues 934–1029 form the Fibronectin type-III 3 domain; that stretch reads PPQIVKIEDV…TKESAVIARD (96 aa). Residues 1047–1141 enclose the Ig-like C2-type 7 domain; that stretch reads PMFTQPLVNT…CKLEVKVIAQ (95 aa).

It belongs to the immunoglobulin superfamily. MyBP family. In terms of assembly, interacts with USP25 (isoform USP25m only); the interaction prevents proteasomal degradation of MYBPC1.

Thick filament-associated protein located in the crossbridge region of vertebrate striated muscle a bands. Slow skeletal protein that binds to both myosin and actin. In vitro, binds to native thin filaments and modifies the activity of actin-activated myosin ATPase. May modulate muscle contraction or may play a more structural role. This is Myosin-binding protein C, slow-type (MYBPC1) from Homo sapiens (Human).